The following is a 212-amino-acid chain: Imidazole glycerol phosphate synthase subunit HisH (212 aa).

One can recognise a Glutamine amidotransferase type-1 domain in the interval 1 to 211 (MIGVIDYGMG…KQFTQEQKVK (211 aa)). Cysteine 79 serves as the catalytic Nucleophile. Catalysis depends on residues histidine 186 and glutamate 188.

Heterodimer of HisH and HisF.

It localises to the cytoplasm. It carries out the reaction 5-[(5-phospho-1-deoxy-D-ribulos-1-ylimino)methylamino]-1-(5-phospho-beta-D-ribosyl)imidazole-4-carboxamide + L-glutamine = D-erythro-1-(imidazol-4-yl)glycerol 3-phosphate + 5-amino-1-(5-phospho-beta-D-ribosyl)imidazole-4-carboxamide + L-glutamate + H(+). The enzyme catalyses L-glutamine + H2O = L-glutamate + NH4(+). Its pathway is amino-acid biosynthesis; L-histidine biosynthesis; L-histidine from 5-phospho-alpha-D-ribose 1-diphosphate: step 5/9. Its function is as follows. IGPS catalyzes the conversion of PRFAR and glutamine to IGP, AICAR and glutamate. The HisH subunit catalyzes the hydrolysis of glutamine to glutamate and ammonia as part of the synthesis of IGP and AICAR. The resulting ammonia molecule is channeled to the active site of HisF. In Bacillus licheniformis (strain ATCC 14580 / DSM 13 / JCM 2505 / CCUG 7422 / NBRC 12200 / NCIMB 9375 / NCTC 10341 / NRRL NRS-1264 / Gibson 46), this protein is Imidazole glycerol phosphate synthase subunit HisH.